Reading from the N-terminus, the 252-residue chain is Probable transcriptional regulatory protein RT0442 (252 aa).

Positions 1–22 are disordered; it reads MSGHSKFKNIQHRKGAQDKKKS.

Belongs to the TACO1 family.

The protein localises to the cytoplasm. In Rickettsia typhi (strain ATCC VR-144 / Wilmington), this protein is Probable transcriptional regulatory protein RT0442.